A 335-amino-acid chain; its full sequence is Acetyl-coenzyme A carboxylase carboxyl transferase subunit alpha (335 aa).

Residues 40–294 (QLETLAARRR…KEAIEKHLNA (255 aa)) enclose the CoA carboxyltransferase C-terminal domain.

It belongs to the AccA family. As to quaternary structure, acetyl-CoA carboxylase is a heterohexamer composed of biotin carboxyl carrier protein (AccB), biotin carboxylase (AccC) and two subunits each of ACCase subunit alpha (AccA) and ACCase subunit beta (AccD).

The protein localises to the cytoplasm. The catalysed reaction is N(6)-carboxybiotinyl-L-lysyl-[protein] + acetyl-CoA = N(6)-biotinyl-L-lysyl-[protein] + malonyl-CoA. Its pathway is lipid metabolism; malonyl-CoA biosynthesis; malonyl-CoA from acetyl-CoA: step 1/1. In terms of biological role, component of the acetyl coenzyme A carboxylase (ACC) complex. First, biotin carboxylase catalyzes the carboxylation of biotin on its carrier protein (BCCP) and then the CO(2) group is transferred by the carboxyltransferase to acetyl-CoA to form malonyl-CoA. This chain is Acetyl-coenzyme A carboxylase carboxyl transferase subunit alpha, found in Prochlorococcus marinus (strain AS9601).